Reading from the N-terminus, the 500-residue chain is Zinc finger protein PLAG1 (500 aa).

Residues 1–30 (MATVIPGDLSEVRDTQKVPSGKRKRGETKP) form a disordered region. The segment at 2–84 (ATVIPGDLSE…SKYKLQRHMA (83 aa)) is interaction with KPNA2. The Nuclear localization signal motif lies at 22 to 25 (KRKR). C2H2-type zinc fingers lie at residues 34 to 56 (FPCQ…SYSH), 62 to 86 (YKCI…MATH), 92 to 114 (HKCN…LHTH), 121 to 143 (FKCE…LALH), 150 to 172 (LTCK…LKSH), 185 to 207 (HQCE…MVVH), and 213 to 236 (FLCQ…KKSH). The segment at 41-242 (KAFNSVEKLK…KKSHNQELLK (202 aa)) is decreased nuclear import with localization in the nucleus but also in the cytoplasm. Residues 243–384 (VKTEPVDFLD…QASSSSKLGL (142 aa)) form a repression domain; contains 3 sumoylation motifs and massively decrease transcription activity region. An activates transcription; Inhibition of nuclear import due to lack of NLS and KPNA2 interaction region spans residues 243-500 (VKTEPVDFLD…TLPRFHQAFQ (258 aa)). Glycyl lysine isopeptide (Lys-Gly) (interchain with G-Cter in SUMO) cross-links involve residues Lys-244 and Lys-263. A disordered region spans residues 365 to 388 (GGVPSSSQDSQASSSSKLGLDPQI). Residues 369–380 (SSSQDSQASSSS) show a composition bias toward low complexity. The tract at residues 385–500 (DPQIGSLDDG…TLPRFHQAFQ (116 aa)) is massively activates transcription.

The protein belongs to the krueppel C2H2-type zinc-finger protein family. Interacts with KPNA2, which escorts protein to the nucleus via interaction with nuclear localization signal. Interacts with E3 SUMO-protein ligase PIAS1, PIAS2 and PIAS4. Sumoylated with SUMO1; which inhibits transcriptional activity, but does not affect nuclear localization. Blockers of sumoylation pathway such as SENP3 and inactive UBE2I increases transcriptional capacity. Sumoylation is increased in the presence of PIAS1. Post-translationally, acetylated by lysine acetyltransferase EP300; which activates transcriptional capacity. Lysine residues that are sumoylated also seem to be target for acetylation. In terms of tissue distribution, expressed in fetal tissues such as lung, liver and kidney. Not detected or weak detection in normal adult tissues, but highly expressed in salivary gland with benign or malignant pleiomorphic adenomas with or without 8q12 aberrations, with preferential occurrence in benign tumors.

The protein localises to the nucleus. In terms of biological role, transcription factor whose activation results in up-regulation of target genes, such as IGFII, leading to uncontrolled cell proliferation: when overexpressed in cultured cells, higher proliferation rate and transformation are observed. Other target genes such as CRLF1, CRABP2, CRIP2, PIGF are strongly induced in cells with PLAG1 induction. Proto-oncogene whose ectopic expression can trigger the development of pleomorphic adenomas of the salivary gland and lipoblastomas. Overexpression is associated with up-regulation of IGFII, is frequently observed in hepatoblastoma, common primary liver tumor in childhood. Cooperates with CBFB-MYH11, a fusion gene important for myeloid leukemia. This is Zinc finger protein PLAG1 (PLAG1) from Homo sapiens (Human).